The following is a 384-amino-acid chain: Dual-specificity RNA methyltransferase RlmN (384 aa).

E105 acts as the Proton acceptor in catalysis. Residues E111 to D350 form the Radical SAM core domain. C118 and C355 are oxidised to a cystine. [4Fe-4S] cluster is bound by residues C125, C129, and C132. Residues G179–E180, S211, S233–H235, and N312 contribute to the S-adenosyl-L-methionine site. Residue C355 is the S-methylcysteine intermediate of the active site.

It belongs to the radical SAM superfamily. RlmN family. [4Fe-4S] cluster is required as a cofactor.

The protein resides in the cytoplasm. It carries out the reaction adenosine(2503) in 23S rRNA + 2 reduced [2Fe-2S]-[ferredoxin] + 2 S-adenosyl-L-methionine = 2-methyladenosine(2503) in 23S rRNA + 5'-deoxyadenosine + L-methionine + 2 oxidized [2Fe-2S]-[ferredoxin] + S-adenosyl-L-homocysteine. The catalysed reaction is adenosine(37) in tRNA + 2 reduced [2Fe-2S]-[ferredoxin] + 2 S-adenosyl-L-methionine = 2-methyladenosine(37) in tRNA + 5'-deoxyadenosine + L-methionine + 2 oxidized [2Fe-2S]-[ferredoxin] + S-adenosyl-L-homocysteine. Its function is as follows. Specifically methylates position 2 of adenine 2503 in 23S rRNA and position 2 of adenine 37 in tRNAs. m2A2503 modification seems to play a crucial role in the proofreading step occurring at the peptidyl transferase center and thus would serve to optimize ribosomal fidelity. In Escherichia coli O9:H4 (strain HS), this protein is Dual-specificity RNA methyltransferase RlmN.